We begin with the raw amino-acid sequence, 213 residues long: MTTGPSPIEMLTARNLECIRGEHRLFSNLSFSVNPGELMFVGGPNGSGKTSLLRLLCGLSLPDDGEIYWNGTDIRKLGVDYRDVMTYLGHLGGIKDDLTAIENLRISCALAGCEIDEDQAADALGQIGLAGREMLPARVLSQGQRRRVALARLLVTRTKLWILDEPLTALDVAAVELIKGILEHNLAKGGMVIMTTHQELVMSTVTVHHLVLS.

The region spanning 11–213 (LTARNLECIR…TVTVHHLVLS (203 aa)) is the ABC transporter domain. ATP is bound at residue 43–50 (GPNGSGKT).

The protein belongs to the ABC transporter superfamily. CcmA exporter (TC 3.A.1.107) family. The complex is composed of two ATP-binding proteins (CcmA) and two transmembrane proteins (CcmB).

It localises to the cell inner membrane. It carries out the reaction heme b(in) + ATP + H2O = heme b(out) + ADP + phosphate + H(+). Part of the ABC transporter complex CcmAB involved in the biogenesis of c-type cytochromes; once thought to export heme, this seems not to be the case, but its exact role is uncertain. Responsible for energy coupling to the transport system. The polypeptide is Cytochrome c biogenesis ATP-binding export protein CcmA (Nitrosomonas europaea (strain ATCC 19718 / CIP 103999 / KCTC 2705 / NBRC 14298)).